The primary structure comprises 287 residues: UPF0761 membrane protein MS0032 (287 aa).

6 consecutive transmembrane segments (helical) span residues 37–57, 93–113, 128–148, 174–194, 204–224, and 238–258; these read MLAIVPLVMVVFAIFSAFPMF, SMSAVGIISLIAVALLLINQI, FIFSMTIYWTLLTLGPIFIGM, LLSFVPFLLTWLSFSLIYTLV, AAVGALVAAIFFTLGKKAFAW, and AMATLPITLLWIQLSWLFILL.

Belongs to the UPF0761 family.

It is found in the cell inner membrane. The chain is UPF0761 membrane protein MS0032 from Mannheimia succiniciproducens (strain KCTC 0769BP / MBEL55E).